The sequence spans 364 residues: Cobalt-precorrin-5B C(1)-methyltransferase (364 aa).

Belongs to the CbiD family.

The catalysed reaction is Co-precorrin-5B + S-adenosyl-L-methionine = Co-precorrin-6A + S-adenosyl-L-homocysteine. Its pathway is cofactor biosynthesis; adenosylcobalamin biosynthesis; cob(II)yrinate a,c-diamide from sirohydrochlorin (anaerobic route): step 6/10. Catalyzes the methylation of C-1 in cobalt-precorrin-5B to form cobalt-precorrin-6A. The protein is Cobalt-precorrin-5B C(1)-methyltransferase of Pseudomonas putida (strain GB-1).